The following is a 162-amino-acid chain: Interleukin-15 (162 aa).

A signal peptide spans 1–29 (MRILKPHLRSTSIQCYLCLLLNSHFLTEA). Residues 30–48 (GIHVFILGCISAGLPKTEA) constitute a propeptide that is removed on maturation. Disulfide bonds link cysteine 83–cysteine 133 and cysteine 90–cysteine 136. Asparagine 108 is a glycosylation site (N-linked (GlcNAc...) asparagine).

This sequence belongs to the IL-15/IL-21 family.

It localises to the secreted. In terms of biological role, cytokine that plays a major role in the development of inflammatory and protective immune responses to microbial invaders and parasites by modulating immune cells of both the innate and adaptive immune systems. Stimulates the proliferation of natural killer cells, T-cells and B-cells and promotes the secretion of several cytokines. In monocytes, induces the production of IL8 and monocyte chemotactic protein 1/CCL2, two chemokines that attract neutrophils and monocytes respectively to sites of infection. Unlike most cytokines, which are secreted in soluble form, IL15 is expressed in association with its high affinity IL15RA on the surface of IL15-producing cells and delivers signals to target cells that express IL2RB and IL2RG receptor subunits. Binding to its receptor triggers the phosphorylation of JAK1 and JAK3 and the recruitment and subsequent phosphorylation of signal transducer and activator of transcription-3/STAT3 and STAT5. In mast cells, induces the rapid tyrosine phosphorylation of STAT6 and thereby controls mast cell survival and release of cytokines such as IL4. The polypeptide is Interleukin-15 (IL15) (Ailuropoda melanoleuca (Giant panda)).